An 80-amino-acid polypeptide reads, in one-letter code: Trefoil factor 3 (80 aa).

The N-terminal stretch at 1–21 is a signal peptide; sequence MEARMFWLLVVLLALASSSSA. The 44-residue stretch at 30–73 folds into the P-type domain; it reads NQCAVPAKDRVDCGYPQVTPEQCNNRGCCFDSSIXGVPWCFKPL. Intrachain disulfides connect C32–C58, C42–C57, and C52–C69.

As to quaternary structure, monomer. Homodimer; disulfide-linked.

It is found in the secreted. The protein resides in the extracellular space. Its subcellular location is the extracellular matrix. It localises to the cytoplasm. In terms of biological role, involved in the maintenance and repair of the intestinal mucosa. Promotes the mobility of epithelial cells in healing processes (motogen). In Sus scrofa (Pig), this protein is Trefoil factor 3 (TFF3).